Consider the following 305-residue polypeptide: Peroxisome biogenesis factor 2 (305 aa).

Over 1 to 15 the chain is Peroxisomal matrix; the sequence is MAAREESTQSANRVL. Residues 16–42 form a helical membrane-spanning segment; the sequence is RISQLDALELNKALEQLVWSQFTQCFH. Over 43–48 the chain is Cytoplasmic; it reads GFKPGL. A helical transmembrane segment spans residues 49-74; it reads LARFEPEVKAFLWLFLWRFTIYSKNA. Residues 75–98 lie on the Peroxisomal matrix side of the membrane; it reads TVGQSVLNIQHKNDSSPNPVYQPP. Residues 99–125 form a helical membrane-spanning segment; the sequence is SKNQKLLYAVCTIGGRWLEERCYDLFR. The Cytoplasmic segment spans residues 126–133; the sequence is NRHLASFG. A helical transmembrane segment spans residues 134-160; sequence KAKQCMNFVVGLLKLGELMNFLIFLQK. At 161-187 the chain is on the peroxisomal matrix side; that stretch reads GKFATLTERLLGIHSVFCKPQNMREVG. The chain crosses the membrane as a helical span at residues 188 to 211; it reads FEYMNRELLWHGFAEFLIFLLPLI. At 212–305 the chain is on the cytoplasmic side; the sequence is NIQKLKAKLS…GIQMSEVNAL (94 aa). 8 residues coordinate Zn(2+): Cys244, Cys247, Cys259, His261, Cys264, Cys267, Cys280, and Cys283. An RING-type zinc finger spans residues 244 to 284; sequence CALCGEWPTMPHTIGCEHVFCYYCVKSSFLFDIYFTCPKCG.

The protein belongs to the pex2/pex10/pex12 family. Component of the PEX2-PEX10-PEX12 retrotranslocation channel, composed of PEX2, PEX10 and PEX12. Post-translationally, forms intramolecular and intermolecular disulfide bonds in response to reactive oxygen species (ROS), promoting higher stability.

Its subcellular location is the peroxisome membrane. The catalysed reaction is [E2 ubiquitin-conjugating enzyme]-S-ubiquitinyl-L-cysteine + [acceptor protein]-L-cysteine = [E2 ubiquitin-conjugating enzyme]-L-cysteine + [acceptor protein]-S-ubiquitinyl-L-cysteine.. It carries out the reaction S-ubiquitinyl-[E2 ubiquitin-conjugating enzyme]-L-cysteine + [acceptor protein]-L-lysine = [E2 ubiquitin-conjugating enzyme]-L-cysteine + N(6)-ubiquitinyl-[acceptor protein]-L-lysine.. It participates in protein modification; protein ubiquitination. Its function is as follows. E3 ubiquitin-protein ligase component of a retrotranslocation channel required for peroxisome organization by mediating export of the PEX5 receptor from peroxisomes to the cytosol, thereby promoting PEX5 recycling. The retrotranslocation channel is composed of PEX2, PEX10 and PEX12; each subunit contributing transmembrane segments that coassemble into an open channel that specifically allows the passage of PEX5 through the peroxisomal membrane. PEX2 also regulates peroxisome organization by acting as a E3 ubiquitin-protein ligase. PEX2 ubiquitinates PEX5 during its passage through the retrotranslocation channel: catalyzes monoubiquitination of PEX5 at 'Cys-11', a modification that acts as a signal for PEX5 extraction into the cytosol. Required for pexophagy in response to starvation by mediating ubiquitination of peroxisomal proteins, such as PEX5 and ABCD3/PMP70. Also involved in the response to reactive oxygen species (ROS) by mediating 'Lys-48'-linked polyubiquitination and subsequent degradation of PNPLA2/ATGL, thereby regulating lipolysis. This chain is Peroxisome biogenesis factor 2, found in Mus musculus (Mouse).